The following is a 943-amino-acid chain: Isoleucine--tRNA ligase (943 aa).

Positions 58–68 (PYANGTIHIGH) match the 'HIGH' region motif. E567 is a binding site for L-isoleucyl-5'-AMP. The 'KMSKS' region motif lies at 608-612 (KMSKS). Position 611 (K611) interacts with ATP. Residues C906, C909, C926, and C929 each coordinate Zn(2+).

It belongs to the class-I aminoacyl-tRNA synthetase family. IleS type 1 subfamily. In terms of assembly, monomer. It depends on Zn(2+) as a cofactor.

Its subcellular location is the cytoplasm. It carries out the reaction tRNA(Ile) + L-isoleucine + ATP = L-isoleucyl-tRNA(Ile) + AMP + diphosphate. Functionally, catalyzes the attachment of isoleucine to tRNA(Ile). As IleRS can inadvertently accommodate and process structurally similar amino acids such as valine, to avoid such errors it has two additional distinct tRNA(Ile)-dependent editing activities. One activity is designated as 'pretransfer' editing and involves the hydrolysis of activated Val-AMP. The other activity is designated 'posttransfer' editing and involves deacylation of mischarged Val-tRNA(Ile). The polypeptide is Isoleucine--tRNA ligase (Pseudomonas fluorescens (strain Pf0-1)).